The chain runs to 397 residues: MSKEKFVREKPHVNVGTIGHVDHGKTTLTAALTKVLSEKYGGEKKAFDQIDNAPEERARGITIATSHVEYQSDKRHYAHVDCPGHADYVKNMITGAAQMDGAILVVSAADGPMPQTREHIVLAKQVGVPNIVVYLNKADMVDDKELLELVEMEVRDLLNSYDFPGDETPIIVGSALKALEGDKSEVGEPSIIKLVETMDTYFPQPERAIDKPFLMPIEDVFSISGRGTVVTGRVERGIIKVGDEIEIVGIKDTTKTTCTGVEMFRKLLDEGQAGDNVGILLRGTKREEVERGQVLAKPGSITPHKKFEAEIYVLSKEEGGRHTPFLQGYRPQFYFRTTDVTGQLLSLPEGIEMVMPGDNVKVTVELIAPVAMDEGLRFAVREGGRTVGAGVVTKIIE.

The tr-type G domain maps to 10-206 (KPHVNVGTIG…TMDTYFPQPE (197 aa)). The segment at 19 to 26 (GHVDHGKT) is G1. 19 to 26 (GHVDHGKT) is a binding site for GTP. Threonine 26 contacts Mg(2+). The G2 stretch occupies residues 60 to 64 (GITIA). Residues 81-84 (DCPG) are G3. Residues 81-85 (DCPGH) and 136-139 (NKAD) contribute to the GTP site. Residues 136 to 139 (NKAD) form a G4 region. The segment at 174–176 (SAL) is G5.

The protein belongs to the TRAFAC class translation factor GTPase superfamily. Classic translation factor GTPase family. EF-Tu/EF-1A subfamily. As to quaternary structure, monomer.

It localises to the cytoplasm. It carries out the reaction GTP + H2O = GDP + phosphate + H(+). GTP hydrolase that promotes the GTP-dependent binding of aminoacyl-tRNA to the A-site of ribosomes during protein biosynthesis. This chain is Elongation factor Tu, found in Coxiella burnetii (strain Dugway 5J108-111).